Reading from the N-terminus, the 757-residue chain is MDVNPTLLFLKVPAQNAISTTFPYTGDPPYSHGTGTGYTMDTVNRTHQYSERGRWTKNTETGAPQLNPIDGPLPEDNEPSGYAQTDCVLEAMAFLEESHPGIFENSCIETMEVVQQTRVDKLTQGRQTYDWTLNRNQPAATALANTIEVFRSNGLMANESGRLIDFLKDVMESMDKEEIEITTHFQRKRRVRDNVTKKMVTQRTIGKKKQRLNKRSYLIRALTLNTMTKDAERGKLKRRAIATPGMQIRGFVYFVETLARSICEKLEQSGLPVGGNEKKAKLANVVRKMMTNSQDTEISFTITGDNTKWNENQNPRMFLAVITYITRNQPEWFRNILSIAPIMFSNKMARLGKGYMFESKSMKLRTQISAEMLANIDLKYFNDSTRKKIEKIRPLLIDGTASLSPGMMMGMFNMLSTVLGVSILNLGQKRYTKTTYWWDGLQSSDDFALIVNAPNHAGIQAGVDRFYRTCKLLGINMSKKKSYINRTGTFEFTSFFYRYGFVANFSMELPSFGVSGINESADMSIGVTVIKNNMINNDLGPATAQMALQLFIKDYRYTYRCHRGDTQIQTRRSFEIKKLWEQTRSKAGLLVSDGGPNLYNIRNLHTPEVCLKWELMDEDYQGRLCNPLNPFVSHKEIESVNNAVMMPAHGPAKNMEYDAVATTHSWVPKRNRSILNTSQRGILEDEQMYQRCCNLFERFFPSSSYRRPVGISSMVEAMVSRARIDARIDFESGRIKKEDFTEIMKICSTIEELRRQK.

Residues 50–82 (SERGRWTKNTETGAPQLNPIDGPLPEDNEPSGY) are disordered. Short sequence motifs (nuclear localization signal) lie at residues 187-195 (RKRRVRDNV) and 203-216 (RTIGKKKQRLNKRS). A promoter-binding site region spans residues 249–256 (RGFVYFVE). Positions 286-483 (VRKMMTNSQD…GINMSKKKSY (198 aa)) constitute a RdRp catalytic domain.

Belongs to the influenza viruses polymerase PB1 family. Influenza RNA polymerase is composed of three subunits: PB1, PB2 and PA. Interacts (via N-terminus) with PA (via C-terminus). Interacts (via C-terminus) with PB2 (via N-terminus); this interaction is essential for transcription initiation. Interacts (via C-terminus) with human PKP2 (via N-terminus); the interaction competitively inhibits the interaction between the RNA polymerase subunits PB1 and PB2. Post-translationally, phosphorylated by host PRKCA.

It localises to the host nucleus. It is found in the host cytoplasm. It carries out the reaction RNA(n) + a ribonucleoside 5'-triphosphate = RNA(n+1) + diphosphate. Its function is as follows. RNA-dependent RNA polymerase which is responsible for replication and transcription of virus RNA segments. The transcription of viral mRNAs occurs by a unique mechanism called cap-snatching. 5' methylated caps of cellular mRNAs are cleaved after 10-13 nucleotides by PA. In turn, these short capped RNAs are used as primers by PB1 for transcription of viral mRNAs. During virus replication, PB1 initiates RNA synthesis and copy vRNA into complementary RNA (cRNA) which in turn serves as a template for the production of more vRNAs. The chain is RNA-directed RNA polymerase catalytic subunit from Influenza A virus (strain A/Beijing/11/1956 H1N1).